We begin with the raw amino-acid sequence, 248 residues long: Type II secretion system protein N (248 aa).

The Cytoplasmic segment spans residues 1–6 (MKLKSG). Residues 7-27 (IVTGVALVLAYGLFLASYAPA) form a helical; Signal-anchor for type II membrane protein membrane-spanning segment. The Periplasmic segment spans residues 28–248 (RLLTAVPLPA…RTLNFQGRLL (221 aa)).

It belongs to the GSP N family.

It is found in the cell inner membrane. Functionally, involved in a type II secretion system (T2SS, formerly general secretion pathway, GSP) for the export of proteins. Required for the translocation of the multiple pectic enzymes. This chain is Type II secretion system protein N (outN), found in Pectobacterium carotovorum subsp. carotovorum (Erwinia carotovora subsp. carotovora).